An 898-amino-acid polypeptide reads, in one-letter code: Pyruvate, phosphate dikinase (898 aa).

Positions 1–355 (MAKWVYTFGA…LWMLQTRSGK (355 aa)) are N-terminal. Arginine 96 is a binding site for ATP. The tract at residues 356-412 (RTAKSALKIAVDMAEEGLISKEEAVARIDPASLDQLLHPTIDPHARRDIIGSGLPAS) is linker 1. Positions 413–511 (PGAATGEIVF…TLRKGDVITI (99 aa)) are central. Threonine 466 is modified (phosphothreonine; by PDRP1). The active-site Tele-phosphohistidine intermediate is histidine 468. The interval 512–546 (DGSSGQVLKGEIPMLQPELSGDFGKIMQWADASRR) is linker 2. Residues 547–898 (MTVRTNAETP…VAEVQALAAS (352 aa)) are C-terminal. The substrate site is built by arginine 574, arginine 630, glutamate 758, glycine 779, threonine 780, asparagine 781, and aspartate 782. Position 758 (glutamate 758) interacts with Mg(2+). Aspartate 782 contributes to the Mg(2+) binding site. Catalysis depends on cysteine 844, which acts as the Proton donor.

It belongs to the PEP-utilizing enzyme family. Homodimer. It depends on Mg(2+) as a cofactor. Phosphorylation of Thr-466 in the dark inactivates the enzyme. Dephosphorylation upon light stimulation reactivates the enzyme.

It carries out the reaction pyruvate + phosphate + ATP = phosphoenolpyruvate + AMP + diphosphate + H(+). With respect to regulation, activated by light-induced dephosphorylation. Inhibited by dark-induced phosphorylation. Both reactions are catalyzed by PDRP1. Catalyzes the reversible phosphorylation of pyruvate and phosphate. The protein is Pyruvate, phosphate dikinase (ppdK) of Rhizobium meliloti (strain 1021) (Ensifer meliloti).